Reading from the N-terminus, the 349-residue chain is Holliday junction branch migration complex subunit RuvB (349 aa).

The large ATPase domain (RuvB-L) stretch occupies residues 1–183 (MTDPSRLVTP…FGIPIRLNFY (183 aa)). Residues leucine 22, arginine 23, glycine 64, lysine 67, threonine 68, threonine 69, 130–132 (EDF), arginine 173, tyrosine 183, and arginine 220 contribute to the ATP site. Threonine 68 serves as a coordination point for Mg(2+). The interval 184 to 254 (TIEELESIVT…IADHALGALE (71 aa)) is small ATPAse domain (RuvB-S). A head domain (RuvB-H) region spans residues 257–349 (SAGLDAMDRR…GLFGDTGDQE (93 aa)). DNA-binding residues include arginine 293, arginine 312, and arginine 317.

The protein belongs to the RuvB family. Homohexamer. Forms an RuvA(8)-RuvB(12)-Holliday junction (HJ) complex. HJ DNA is sandwiched between 2 RuvA tetramers; dsDNA enters through RuvA and exits via RuvB. An RuvB hexamer assembles on each DNA strand where it exits the tetramer. Each RuvB hexamer is contacted by two RuvA subunits (via domain III) on 2 adjacent RuvB subunits; this complex drives branch migration. In the full resolvosome a probable DNA-RuvA(4)-RuvB(12)-RuvC(2) complex forms which resolves the HJ.

The protein resides in the cytoplasm. The catalysed reaction is ATP + H2O = ADP + phosphate + H(+). Its function is as follows. The RuvA-RuvB-RuvC complex processes Holliday junction (HJ) DNA during genetic recombination and DNA repair, while the RuvA-RuvB complex plays an important role in the rescue of blocked DNA replication forks via replication fork reversal (RFR). RuvA specifically binds to HJ cruciform DNA, conferring on it an open structure. The RuvB hexamer acts as an ATP-dependent pump, pulling dsDNA into and through the RuvAB complex. RuvB forms 2 homohexamers on either side of HJ DNA bound by 1 or 2 RuvA tetramers; 4 subunits per hexamer contact DNA at a time. Coordinated motions by a converter formed by DNA-disengaged RuvB subunits stimulates ATP hydrolysis and nucleotide exchange. Immobilization of the converter enables RuvB to convert the ATP-contained energy into a lever motion, pulling 2 nucleotides of DNA out of the RuvA tetramer per ATP hydrolyzed, thus driving DNA branch migration. The RuvB motors rotate together with the DNA substrate, which together with the progressing nucleotide cycle form the mechanistic basis for DNA recombination by continuous HJ branch migration. Branch migration allows RuvC to scan DNA until it finds its consensus sequence, where it cleaves and resolves cruciform DNA. The polypeptide is Holliday junction branch migration complex subunit RuvB (Rhodopseudomonas palustris (strain TIE-1)).